We begin with the raw amino-acid sequence, 188 residues long: UPF0340 protein GK3370 (188 aa).

The protein belongs to the UPF0340 family.

The chain is UPF0340 protein GK3370 from Geobacillus kaustophilus (strain HTA426).